A 641-amino-acid chain; its full sequence is Methionine--tRNA ligase (641 aa).

Residues 13–23 (YYPSAKLHIGN) carry the 'HIGH' region motif. Zn(2+)-binding residues include C128, C131, C145, and C148. The 'KMSKS' region signature appears at 298 to 302 (KMSKS). K301 provides a ligand contact to ATP. The region spanning 539–641 (DFDKIDLRVV…GELPTGSQVR (103 aa)) is the tRNA-binding domain.

The protein belongs to the class-I aminoacyl-tRNA synthetase family. MetG type 2A subfamily. As to quaternary structure, homodimer. Requires Zn(2+) as cofactor.

The protein localises to the cytoplasm. It carries out the reaction tRNA(Met) + L-methionine + ATP = L-methionyl-tRNA(Met) + AMP + diphosphate. Its function is as follows. Is required not only for elongation of protein synthesis but also for the initiation of all mRNA translation through initiator tRNA(fMet) aminoacylation. The sequence is that of Methionine--tRNA ligase from Clostridium tetani (strain Massachusetts / E88).